Reading from the N-terminus, the 198-residue chain is Single-stranded DNA cytosine deaminase (198 aa).

The short motif at 1–30 is the Bipartite nuclear localization signal element; the sequence is MDSLLMKQRKFLYHFKNVRWAKGRHETYLC. Residues 2–26 are interaction with SUPT6H; it reads DSLLMKQRKFLYHFKNVRWAKGRHE. Residues 23–129 enclose the CMP/dCMP-type deaminase domain; the sequence is GRHETYLCYV…KAEPEGLRRL (107 aa). At T27 the chain carries Phosphothreonine; by PKA. S38 bears the Phosphoserine; by PKA mark. The interval 39 to 42 is important for interaction with CTNNBL1; that stretch reads ATSF. Zn(2+) is bound at residue H56. E58 serves as the catalytic Proton donor. Zn(2+) contacts are provided by C87 and C90. Residues 88–116 form a required for interaction with RNF126 region; that stretch reads YDCARHVADFLRGYPNLSLRIFAARLYFC. Residues 183–198 carry the Nuclear export signal motif; sequence LYEVDDLRDAFRTLGL.

The protein belongs to the cytidine and deoxycytidylate deaminase family. Interacts with CTNNBL1; the interaction is important for the immunoglobulin switch activity of AICDA. Interacts (via its NLS) with KPNA1. Interacts with PKA/PRKACA and PRKAR1A/PKR1. Interacts with SUPT6H, TRIM28 and NCL. Directly interacts with MCM3AP; this interaction may favor AICDA recruitment to immunoglobulin variable region genes, hence promoting somatic hypermutations. It depends on Zn(2+) as a cofactor. Post-translationally, ser-38 is the major site whereas Thr-27 is the minor site of phosphorylation. Phosphorylation regulates its class-switch recombination activity. In terms of processing, probably monoubiquitinated on several residues by RNF126. As to expression, expressed in thymus, lung, spleen, kidney, small intestine, lymph node and tonsil.

It is found in the nucleus. It localises to the cytoplasm. The enzyme catalyses a 2'-deoxycytidine in single-stranded DNA + H2O + H(+) = a 2'-deoxyuridine in single-stranded DNA + NH4(+). Single-stranded DNA-specific cytidine deaminase. Involved in somatic hypermutation (SHM), gene conversion, and class-switch recombination (CSR) in B-lymphocytes by deaminating C to U during transcription of Ig-variable (V) and Ig-switch (S) region DNA. Required for several crucial steps of B-cell terminal differentiation necessary for efficient antibody responses. May also play a role in the epigenetic regulation of gene expression by participating in DNA demethylation. The polypeptide is Single-stranded DNA cytosine deaminase (AICDA) (Canis lupus familiaris (Dog)).